The following is a 222-amino-acid chain: Adenylate kinase (222 aa).

Serine 2 is a propeptide (removed in mature form). Serine 2 and serine 3 each carry N-acetylserine. 16 to 21 (GAGKGT) lines the ATP pocket. The segment at 36 to 65 (ATGDMLRSQIAKGTQLGLEAKKIMDQGGLV) is NMP. AMP contacts are provided by residues threonine 37, arginine 42, 63–65 (GLV), 92–95 (GFPR), and glutamine 99. Residues 133-170 (GRLIHPASGRSYHKIFNPPKEDMKDDVTGEALVQRSDD) are LID. ATP contacts are provided by residues arginine 134 and 143 to 144 (SY). Residues arginine 167 and arginine 178 each contribute to the AMP site. Glutamine 206 contributes to the ATP binding site.

This sequence belongs to the adenylate kinase family. AK2 subfamily. Monomer.

It localises to the cytoplasm. It is found in the cytosol. Its subcellular location is the mitochondrion intermembrane space. The catalysed reaction is AMP + ATP = 2 ADP. Functionally, catalyzes the reversible transfer of the terminal phosphate group between ATP and AMP. Plays an important role in cellular energy homeostasis and in adenine nucleotide metabolism. Adenylate kinase activity is critical for regulation of the phosphate utilization and the AMP de novo biosynthesis pathways. The sequence is that of Adenylate kinase from Saccharomyces cerevisiae (strain YJM789) (Baker's yeast).